A 374-amino-acid polypeptide reads, in one-letter code: MRTGRYIGIMSGTSLDGIDVVLAAIDEHTVAQQARYCHPIPMPIKQQILAMCQGQAVTLSRFGQLDTRLGILFAEAVLCLLQQTGVAPHEVTAIACHGQTVWHEPEGVAPCTLQIGDNNCIAAMTGITTVGDFRRRDMALGGQGAPLMPAFHHALLAHPQERRMVLNIGGIANLSLLLPGQPIRGYDTGPGNMLLDAWTWRHRKAPYDKDGRWARSGQVHQSLLQHLLADDYFLRAAPKSTGREYFNLGWLERKLSRLGPVPAQDVQATLVELTARTIAQQVLLCGGCEHLLVCGGGVRNPLVMNRLSALLPGIEVSPTDKFGVSGDDMEALAFAWLAFRTLSGLPGNLPSVTGAREETLLGAIYPVMPATEKT.

Residue 12 to 19 participates in ATP binding; sequence GTSLDGID.

Belongs to the anhydro-N-acetylmuramic acid kinase family.

It catalyses the reaction 1,6-anhydro-N-acetyl-beta-muramate + ATP + H2O = N-acetyl-D-muramate 6-phosphate + ADP + H(+). The protein operates within amino-sugar metabolism; 1,6-anhydro-N-acetylmuramate degradation. Its pathway is cell wall biogenesis; peptidoglycan recycling. Catalyzes the specific phosphorylation of 1,6-anhydro-N-acetylmuramic acid (anhMurNAc) with the simultaneous cleavage of the 1,6-anhydro ring, generating MurNAc-6-P. Is required for the utilization of anhMurNAc either imported from the medium or derived from its own cell wall murein, and thus plays a role in cell wall recycling. This chain is Anhydro-N-acetylmuramic acid kinase, found in Sodalis glossinidius (strain morsitans).